We begin with the raw amino-acid sequence, 714 residues long: Fatty acid oxidation complex subunit alpha (714 aa).

The enoyl-CoA hydratase stretch occupies residues 1-190 (MEMASAFTLN…KLGLVDDVVP (190 aa)). Positions 306–714 (APLNSVGILG…FWKTTATDLQ (409 aa)) are 3-hydroxyacyl-CoA dehydrogenase.

In the N-terminal section; belongs to the enoyl-CoA hydratase/isomerase family. It in the central section; belongs to the 3-hydroxyacyl-CoA dehydrogenase family. As to quaternary structure, heterotetramer of two alpha chains (FadJ) and two beta chains (FadI).

Its subcellular location is the cytoplasm. It catalyses the reaction a (3S)-3-hydroxyacyl-CoA = a (2E)-enoyl-CoA + H2O. The enzyme catalyses a 4-saturated-(3S)-3-hydroxyacyl-CoA = a (3E)-enoyl-CoA + H2O. It carries out the reaction a (3S)-3-hydroxyacyl-CoA + NAD(+) = a 3-oxoacyl-CoA + NADH + H(+). The catalysed reaction is (3S)-3-hydroxybutanoyl-CoA = (3R)-3-hydroxybutanoyl-CoA. It participates in lipid metabolism; fatty acid beta-oxidation. Its function is as follows. Catalyzes the formation of a hydroxyacyl-CoA by addition of water on enoyl-CoA. Also exhibits 3-hydroxyacyl-CoA epimerase and 3-hydroxyacyl-CoA dehydrogenase activities. The chain is Fatty acid oxidation complex subunit alpha from Escherichia coli O17:K52:H18 (strain UMN026 / ExPEC).